Here is a 234-residue protein sequence, read N- to C-terminus: Synaptogyrin-1 (234 aa).

Met-1 carries the post-translational modification N-acetylmethionine. At 1–23 (MEGGAYGAGKAGGAFDPYTLVRQ) the chain is on the cytoplasmic side. Residues 20 to 173 (LVRQPHTILR…QAVLAFQRYQ (154 aa)) enclose the MARVEL domain. A helical transmembrane segment spans residues 24–44 (PHTILRVVSWVFSIVVFGSIV). Over 45–71 (NEGYLNNPEEEEEFCIYNRNPNACSYG) the chain is Lumenal. The chain crosses the membrane as a helical span at residues 72–92 (VTVGVLAFLTCLVYLALDVYF). Topologically, residues 93 to 104 (PQISSVKDRKKA) are cytoplasmic. The helical transmembrane segment at 105-125 (VLSDIGVSAFWAFFWFVGFCF) threads the bilayer. Residues 126-148 (LANQWQVSKPKDNPLNEGTDAAR) lie on the Lumenal side of the membrane. A helical transmembrane segment spans residues 149–169 (AAIAFSFFSIFTWAGQAVLAF). Residues 170 to 234 (QRYQIGADSA…EPQGYQSQGY (65 aa)) lie on the Cytoplasmic side of the membrane. Residues 201–234 (EPSAGSDPTGMGGTYQHPANAFDAEPQGYQSQGY) are disordered.

The protein belongs to the synaptogyrin family. In terms of tissue distribution, nervous system (at protein level).

It localises to the cytoplasmic vesicle. The protein localises to the secretory vesicle. The protein resides in the synaptic vesicle membrane. Its subcellular location is the melanosome. In terms of biological role, may play a role in regulated exocytosis. Modulates the localization of synaptophysin/SYP into synaptic-like microvesicles and may therefore play a role in synaptic-like microvesicle formation and/or maturation. Involved in the regulation of short-term and long-term synaptic plasticity. This chain is Synaptogyrin-1, found in Rattus norvegicus (Rat).